Reading from the N-terminus, the 400-residue chain is Acetate kinase (400 aa).

Asn10 contacts Mg(2+). Lys17 is an ATP binding site. Position 91 (Arg91) interacts with substrate. Asp148 serves as the catalytic Proton donor/acceptor. Residues 208 to 212 (HLGNG), 283 to 285 (DCR), and 331 to 335 (GIGEN) each bind ATP. Residue Glu385 coordinates Mg(2+).

This sequence belongs to the acetokinase family. In terms of assembly, homodimer. The cofactor is Mg(2+). Mn(2+) is required as a cofactor.

The protein resides in the cytoplasm. The enzyme catalyses acetate + ATP = acetyl phosphate + ADP. It functions in the pathway metabolic intermediate biosynthesis; acetyl-CoA biosynthesis; acetyl-CoA from acetate: step 1/2. Functionally, catalyzes the formation of acetyl phosphate from acetate and ATP. Can also catalyze the reverse reaction. This chain is Acetate kinase, found in Shewanella frigidimarina (strain NCIMB 400).